We begin with the raw amino-acid sequence, 508 residues long: Enhancer of mRNA-decapping protein 3 (508 aa).

In terms of domain architecture, Sm spans 1–68 (MAMDWLGSIV…ITELKILEIP (68 aa)). A required for P-body targeting and interaction with DCP1A region spans residues 1 to 79 (MAMDWLGSIV…PGDNQQVGDL (79 aa)). Residues 98-194 (NGTGKVVKKP…KNKDDECFGD (97 aa)) are disordered. Phosphoserine occurs at positions 131, 138, 140, and 161. The interval 191-296 (CFGDDIEELP…HKKLLSVAEK (106 aa)) is required for interaction with DDX6. The DFDF domain maps to 192–228 (FGDDIEELPDTDFDFEGNLALFDKAAVFEEIDTYERR). Positions 283-487 (SYELHKKLLS…DIGIPQQVFQ (205 aa)) constitute a YjeF N-terminal domain.

The protein belongs to the EDC3 family. As to quaternary structure, homodimer (via YjeF N-terminal domain). Forms a complex with DCP1A, DCP2, DDX6 and EDC4/HEDLS, within this complex directly interacts with DCP1A and DDX6. Interacts with ZFP36.

It localises to the cytoplasm. It is found in the P-body. In terms of biological role, binds single-stranded RNA. Involved in the process of mRNA degradation and in the positive regulation of mRNA decapping. This Mus musculus (Mouse) protein is Enhancer of mRNA-decapping protein 3 (Edc3).